Reading from the N-terminus, the 159-residue chain is Probable histone H2A.5 (159 aa).

The segment covering 1 to 10 (MDAAGAGAGG) has biased composition (gly residues). Disordered regions lie at residues 1 to 29 (MDAA…KKAV) and 136 to 159 (EKAA…PKKA). Basic residues-rich tracts occupy residues 11-29 (KLKK…KKAV) and 148-159 (PKKAAGKSPKKA). Short sequence motifs (SPKK motif) lie at residues 147-150 (SPKK) and 155-158 (SPKK).

It belongs to the histone H2A family. In terms of assembly, the nucleosome is a histone octamer containing two molecules each of H2A, H2B, H3 and H4 assembled in one H3-H4 heterotetramer and two H2A-H2B heterodimers. The octamer wraps approximately 147 bp of DNA.

It localises to the nucleus. The protein localises to the chromosome. Functionally, core component of nucleosome. Nucleosomes wrap and compact DNA into chromatin, limiting DNA accessibility to the cellular machineries which require DNA as a template. Histones thereby play a central role in transcription regulation, DNA repair, DNA replication and chromosomal stability. DNA accessibility is regulated via a complex set of post-translational modifications of histones, also called histone code, and nucleosome remodeling. The protein is Probable histone H2A.5 of Oryza sativa subsp. indica (Rice).